The primary structure comprises 473 residues: Ribulose bisphosphate carboxylase large chain (473 aa).

A necessary and sufficient to target proteins to carboxysomes, interacts with shell proteins region spans residues 1–136; the sequence is MAVKKYSAGV…RLEDVRFPLA (136 aa). Substrate contacts are provided by N116 and T166. K168 serves as the catalytic Proton acceptor. Substrate is bound at residue K170. Mg(2+) is bound by residues K194, D196, and E197. N6-carboxylysine is present on K194. H287 serves as the catalytic Proton acceptor. Substrate contacts are provided by R288, H320, and S372.

Belongs to the RuBisCO large chain family. Type I subfamily. In terms of assembly, heterohexadecamer of 8 large chains and 8 small chains. Forms a CsoS2-CsoS1-RuBisCO complex. The N-terminus (residues 1-136) interacts with shell proteins CsoS1A, CsoS1B and CsoS1C. Holo-RuBisCO interacts with the N-terminal repeats of CsoS2; binding is sensitive to ionic strength. A fusion of a single N-terminal repeat to the C-terminus of the large subunit of RuBisCO (cbbL) shows the repeat can lie between a CbbL dimer, making minor contacts to CbbS; thus each RuBisCO holoenzyme could bind 8 repeats. Requires Mg(2+) as cofactor.

It is found in the carboxysome. It carries out the reaction 2 (2R)-3-phosphoglycerate + 2 H(+) = D-ribulose 1,5-bisphosphate + CO2 + H2O. It catalyses the reaction D-ribulose 1,5-bisphosphate + O2 = 2-phosphoglycolate + (2R)-3-phosphoglycerate + 2 H(+). Functionally, ruBisCO catalyzes two reactions: the carboxylation of D-ribulose 1,5-bisphosphate, the primary event in carbon dioxide fixation, as well as the oxidative fragmentation of the pentose substrate. Both reactions occur simultaneously and in competition at the same active site. There are estimated to be 270 RuBisCO heterohexadecamers per carboxysome. Alpha-carboxysomes are able to assemble in the absence of RuBisCO, unlike beta-carboxysomes. The RuBisCO large subunit is required for enzyme integration into carboxysomes; replacing it with the carboxysomally targeted gene (Tcr_0838, AC Q31HD9) of H.crungenus places RuBisCO in the carboxysome, while the non-carboxysomal large subunit of H.crungenus (Tcr_0427, AC Q31IK0) is not incorporated in the carboxysome. This Halothiobacillus neapolitanus (strain ATCC 23641 / c2) (Thiobacillus neapolitanus) protein is Ribulose bisphosphate carboxylase large chain.